The primary structure comprises 230 residues: uncharacterized protein (230 aa).

The span at 1–11 shows a compositional bias: polar residues; it reads MPVPSVTVTTD. A disordered region spans residues 1–88; that stretch reads MPVPSVTVTT…TLKRPTSNSI (88 aa). Basic and acidic residues predominate over residues 63-73; sequence DDQHRHSDVHS. The segment covering 79–88 has biased composition (polar residues); the sequence is TLKRPTSNSI. Ser-106 carries the post-translational modification Phosphoserine. Residues 156-179 show a composition bias toward basic and acidic residues; it reads LKREDSRVSSTKKEHINDHTDMHS. The disordered stretch occupies residues 156–203; the sequence is LKREDSRVSSTKKEHINDHTDMHSTRSKVTTNSQGSSLEPNKLNMAVE. Residues 182–194 are compositionally biased toward polar residues; sequence SKVTTNSQGSSLE.

This is an uncharacterized protein from Saccharomyces cerevisiae (strain ATCC 204508 / S288c) (Baker's yeast).